Reading from the N-terminus, the 74-residue chain is Consomatin Gh1 (74 aa).

A signal peptide spans 1-22; that stretch reads MQTACWVMVMMMVWITAPLSEG. Positions 23–57 are excised as a propeptide; that stretch reads GKLNDVIRGLVPDDVTPQLILRSLFFHRPSDSVVR. A disulfide bridge links Cys65 with Cys70. Residue Trp67 is modified to D-tryptophan. 4-hydroxyproline is present on residues Pro71, Pro72, and Pro74.

This sequence belongs to the conotoxin C superfamily. Consomatin family. In terms of tissue distribution, expressed by the venom duct.

It is found in the secreted. Its function is as follows. Moderately activates human somatostatin receptors (SSTR) with a preferential activation of SSTR1 and SSTR4. In vivo, does not cause behavioral changes in mice within a few minutes of intracranial injection, but causes a progressive loss of movement thereafter. Four to five hours after injection, mice recover, even with the highest dose tested. Shows antinociception and antihyperalgesia activities in two mouse models of acute pain, most probably by acting outside the central nervous system. The chain is Consomatin Gh1 from Conus grahami (Cone snail).